We begin with the raw amino-acid sequence, 86 residues long: YcgL domain-containing protein XAC4085 (86 aa).

A YcgL domain is found at 1–83 (MHAYVYKSQR…PKTIVLAGEC (83 aa)).

In Xanthomonas axonopodis pv. citri (strain 306), this protein is YcgL domain-containing protein XAC4085.